The primary structure comprises 461 residues: MSLRIYNTLSRALEAFSPIEPGHVRMYVCGMTVYDLCHLGHARSMVAFDVVQRWLRASGHRVTYVRNITDIDDKIIRRAVENGETIRSLTDRMIDALHQDADALGIERPTHEPRATEYVPQMLSMIGRLQDKGLAYQGTDGDVNFAVRKFPGYGKLSGKSLDELQAGERVAVQDGKQDPLDFVLWKSAKPAEPEEVKWASPWGVGRPGWHIECSAMGCEMLGESFDIHGGGADLQFPHHENEIAQSEGATGKPFSQVWMHNGFINVDNEKMSKSLGNFFTIRDVLKEYDAETVRFFVVRSHYRSPLNYSDVHLNDARGALKRLYTALSLVAPAEVAVDWNHPAAARFKAAMDEDFGTPEAVAVLFELAAEVNRSKSAETAGLLKALAGCLGLLQGDPQAFLQAGTSEMDAGAIEAQIAARAAAKAAKDWAEADRIRKALLEQGIVLKDSPAGTTWEAAAKG.

Residue Cys-29 coordinates Zn(2+). The 'HIGH' region signature appears at Met-31 to His-41. Zn(2+) is bound by residues Cys-213, His-238, and Glu-242. The 'KMSKS' region motif lies at Lys-270–Ser-274. Lys-273 is a binding site for ATP.

Belongs to the class-I aminoacyl-tRNA synthetase family. In terms of assembly, monomer. Requires Zn(2+) as cofactor.

The protein localises to the cytoplasm. It catalyses the reaction tRNA(Cys) + L-cysteine + ATP = L-cysteinyl-tRNA(Cys) + AMP + diphosphate. This Delftia acidovorans (strain DSM 14801 / SPH-1) protein is Cysteine--tRNA ligase.